A 346-amino-acid polypeptide reads, in one-letter code: uncharacterized protein (346 aa).

The interval Gly-322–Ala-346 is disordered.

This is an uncharacterized protein from Mycobacterium tuberculosis (strain CDC 1551 / Oshkosh).